The primary structure comprises 193 residues: Ion-translocating oxidoreductase complex subunit B (193 aa).

Residues 1-26 (MSTMLIAVILLTLLALFFGVLLGFAA) are hydrophobic. A 4Fe-4S domain is found at 32-90 (EGNPIVDELEAILPQTQCGQCGYPGCRPYAEAIANGDKVNKCPPGGTATMEKLASLMGV). [4Fe-4S] cluster is bound by residues Cys49, Cys52, Cys57, Cys73, Cys114, Cys117, Cys120, Cys124, Cys144, Cys147, Cys150, and Cys154. 2 4Fe-4S ferredoxin-type domains span residues 105 to 134 (KVAY…GAGK) and 136 to 164 (MHTV…MIPV).

This sequence belongs to the 4Fe4S bacterial-type ferredoxin family. RnfB subfamily. The complex is composed of six subunits: RnfA, RnfB, RnfC, RnfD, RnfE and RnfG. [4Fe-4S] cluster serves as cofactor.

The protein localises to the cell inner membrane. Its function is as follows. Part of a membrane-bound complex that couples electron transfer with translocation of ions across the membrane. In Shewanella sp. (strain MR-7), this protein is Ion-translocating oxidoreductase complex subunit B.